The sequence spans 206 residues: LexA repressor (206 aa).

The H-T-H motif DNA-binding region spans Tyr-27 to Lys-47. Catalysis depends on for autocatalytic cleavage activity residues Ser-120 and Lys-157.

The protein belongs to the peptidase S24 family. Homodimer.

The catalysed reaction is Hydrolysis of Ala-|-Gly bond in repressor LexA.. In terms of biological role, represses a number of genes involved in the response to DNA damage (SOS response), including recA and lexA. In the presence of single-stranded DNA, RecA interacts with LexA causing an autocatalytic cleavage which disrupts the DNA-binding part of LexA, leading to derepression of the SOS regulon and eventually DNA repair. This chain is LexA repressor, found in Syntrophobacter fumaroxidans (strain DSM 10017 / MPOB).